The primary structure comprises 568 residues: Urease subunit alpha (568 aa).

One can recognise a Urease domain in the interval 133 to 568; that stretch reads GGLDIHIHFN…ELPLAQRYLL (436 aa). Ni(2+) is bound by residues His-138, His-140, and Lys-217. Lys-217 bears the N6-carboxylysine mark. His-219 contributes to the substrate binding site. Positions 246 and 272 each coordinate Ni(2+). His-320 acts as the Proton donor in catalysis. Asp-360 provides a ligand contact to Ni(2+).

This sequence belongs to the metallo-dependent hydrolases superfamily. Urease alpha subunit family. As to quaternary structure, heterotrimer of UreA (gamma), UreB (beta) and UreC (alpha) subunits. Three heterotrimers associate to form the active enzyme. It depends on Ni cation as a cofactor. In terms of processing, carboxylation allows a single lysine to coordinate two nickel ions.

The protein localises to the cytoplasm. It carries out the reaction urea + 2 H2O + H(+) = hydrogencarbonate + 2 NH4(+). Its pathway is nitrogen metabolism; urea degradation; CO(2) and NH(3) from urea (urease route): step 1/1. This Haloarcula marismortui (strain ATCC 43049 / DSM 3752 / JCM 8966 / VKM B-1809) (Halobacterium marismortui) protein is Urease subunit alpha.